Consider the following 341-residue polypeptide: Mitochondrial ubiquitin ligase activator of nfkb 1-A (341 aa).

Topologically, residues 1–5 (MEDFP) are cytoplasmic. Residues 6-26 (VLEMVCLGSSVALSGLFYYIY) form a helical membrane-spanning segment. The Mitochondrial intermembrane portion of the chain corresponds to 27–233 (RKKRKTVDKL…LLMEQEGQAE (207 aa)). A helical transmembrane segment spans residues 234-254 (VWRVFACICALAGVAVLIWTG). The Cytoplasmic portion of the chain corresponds to 255-341 (RRYYRQLKLR…IKRVVPLYQA (87 aa)). The segment at 292–329 (CVICLSNPRGCVLLDCGHVCCCFRCYQALPQPFCPICR) adopts an RING-type zinc-finger fold.

As to quaternary structure, homooligomer.

The protein localises to the mitochondrion outer membrane. The enzyme catalyses S-ubiquitinyl-[E2 ubiquitin-conjugating enzyme]-L-cysteine + [acceptor protein]-L-lysine = [E2 ubiquitin-conjugating enzyme]-L-cysteine + N(6)-ubiquitinyl-[acceptor protein]-L-lysine.. It participates in protein modification; protein ubiquitination. Its function is as follows. E3 ubiquitin-protein ligase that plays a role in the control of mitochondrial morphology. Promotes mitochondrial fragmentation and influences mitochondrial localization. Inhibits cell growth. E3 ubiquitin ligases accept ubiquitin from an E2 ubiquitin-conjugating enzyme in the form of a thioester and then directly transfer the ubiquitin to targeted substrates. The protein is Mitochondrial ubiquitin ligase activator of nfkb 1-A (mul1a) of Danio rerio (Zebrafish).